The sequence spans 124 residues: Non-structural protein 2 (124 aa).

The DLNP; interaction with MAP1B signature appears at 121-124; sequence DLNP.

It belongs to the pneumovirus non-structural protein 2 family. In terms of assembly, monomer (instable). Homomultimer. Heteromultimer with NS1. Interacts with host RIGI (via N-terminus); this interaction prevents host signaling pathway involved in interferon production. Interacts with host MAP1B/microtubule-associated protein 1B.

It localises to the host mitochondrion. Functionally, plays a major role in antagonizing the type I IFN-mediated antiviral response. Acts cooperatively with NS1 to repress activation and nuclear translocation of host IFN-regulatory factor IRF3. Interacts with the host cytoplasmic sensor of viral nucleic acids RIGI and prevents the interaction with its downstream partner MAVS. Together with NS2, participates in the proteasomal degradation of host STAT2, IRF3, IRF7, TBK1 and RIGI through a NS-degradasome involving CUL2 and Elongin-C. The degradasome requires an intact mitochondrial MAVS. Induces host SOCS1 expression. Induces activation of NF-kappa-B. Suppresses premature apoptosis by an NF-kappa-B-dependent, interferon-independent mechanism promoting continued viral replication. The polypeptide is Non-structural protein 2 (1B) (Homo sapiens (Human)).